The following is a 292-amino-acid chain: GTP cyclohydrolase FolE2 (292 aa).

The protein belongs to the GTP cyclohydrolase IV family.

The catalysed reaction is GTP + H2O = 7,8-dihydroneopterin 3'-triphosphate + formate + H(+). It functions in the pathway cofactor biosynthesis; 7,8-dihydroneopterin triphosphate biosynthesis; 7,8-dihydroneopterin triphosphate from GTP: step 1/1. Converts GTP to 7,8-dihydroneopterin triphosphate. The sequence is that of GTP cyclohydrolase FolE2 from Staphylococcus aureus (strain Mu50 / ATCC 700699).